Reading from the N-terminus, the 27-residue chain is Putative phosphoglycerate kinase (27 aa).

Belongs to the phosphoglycerate kinase family. In terms of assembly, monomer. The cofactor is Mg(2+).

It catalyses the reaction (2R)-3-phosphoglycerate + ATP = (2R)-3-phospho-glyceroyl phosphate + ADP. This Pinus strobus (Eastern white pine) protein is Putative phosphoglycerate kinase.